A 495-amino-acid polypeptide reads, in one-letter code: Histidine--tRNA ligase (495 aa).

It belongs to the class-II aminoacyl-tRNA synthetase family. As to quaternary structure, homodimer.

Its subcellular location is the cytoplasm. The enzyme catalyses tRNA(His) + L-histidine + ATP = L-histidyl-tRNA(His) + AMP + diphosphate + H(+). The chain is Histidine--tRNA ligase from Bartonella henselae (strain ATCC 49882 / DSM 28221 / CCUG 30454 / Houston 1) (Rochalimaea henselae).